We begin with the raw amino-acid sequence, 351 residues long: Transmembrane protein 255A (351 aa).

Helical transmembrane passes span 30–50 (IYVT…GLAA), 57–77 (VTVG…LGII), 89–109 (LVAS…CAIV), and 226–246 (TILN…LGGF). The segment at 302–331 (FPSSPPSGLSDEQEPQSPSPSPSYMWSSSA) is disordered.

The protein belongs to the TMEM255 family.

It is found in the membrane. The chain is Transmembrane protein 255A (Tmem255a) from Mus musculus (Mouse).